A 483-amino-acid chain; its full sequence is MNTLNRRDFPGALYPERIIQFGEGNFLRAFIDWQIDLLNEHTDLNSGVVIVRPIKSDFPPSLSVQDGLYTTIIRGLNEQGEAVSDARLIRSVNREISVYSQYDEFLKLAHNPDMRFVFSNTTEAGISYHAEDKFDDAPAVSYPAKLTRLLFERFSHFNGAADKGWVIIPCELIDYNGDALRELVLRYAQEWALPAEFTQWLNDANAFCSTLVDRIVTGYPRDEVTALETELGYHDGFLDTAEHFYLFVIQGPKSLASELRLDKLSLNVLIVDDIKPYKERKVAILNGAHTALVPVAFQAGLDTVGEAMNDAEVCAFVEKAIYQEIIPVLDLPKDELESFASAVTGRFRNPYIKHQLLSIALNGMTKYRTRILPQLLAGQKATGKLPARLTFALAALIAFYRGERNGESYPVQDDQHWLDRYQQLWAQHHDKQISTSELVKAVLSVSEHWEQDLTNVSGLVEQVTLDLDAILLQGMRAAVKQLC.

An NAD(+)-binding site is contributed by 18–29; the sequence is IIQFGEGNFLRA.

It belongs to the mannitol dehydrogenase family. UxaB subfamily.

The enzyme catalyses D-altronate + NAD(+) = keto-D-tagaturonate + NADH + H(+). The protein operates within carbohydrate metabolism; pentose and glucuronate interconversion. In Enterobacter sp. (strain 638), this protein is Altronate oxidoreductase.